We begin with the raw amino-acid sequence, 115 residues long: Large ribosomal subunit protein bL19 (115 aa).

The protein belongs to the bacterial ribosomal protein bL19 family.

In terms of biological role, this protein is located at the 30S-50S ribosomal subunit interface and may play a role in the structure and function of the aminoacyl-tRNA binding site. The protein is Large ribosomal subunit protein bL19 of Streptococcus equi subsp. equi (strain 4047).